The chain runs to 286 residues: 3-amino-tetrahydro-pyrrolizinone reductase (286 aa).

Tyr146 acts as the Proton acceptor in catalysis.

This sequence belongs to the short-chain dehydrogenases/reductases (SDR) family.

The enzyme catalyses 3-amino-5,6,7,7a-tetrahydro-1H-pyrrolizin-1-one + AH2 = 3-amino-tetrahydro-1H-pyrrolizin-1-ol + A. Involved in the biosynthetic pathway of pyrrolizwilline, a pyrrolizidine alkaloid. Catalyzes the reduction of 3-amino-tetrahydro-pyrrolizinone to 3-amino-tetrahydro-pyrrolizinol. The protein is 3-amino-tetrahydro-pyrrolizinone reductase (xhpD) of Xenorhabdus hominickii.